Consider the following 359-residue polypeptide: Probable deacetylase AF_0130 (359 aa).

The Proton donor/acceptor role is filled by histidine 126. Positions 162, 164, and 249 each coordinate Zn(2+).

Belongs to the histone deacetylase family. Zn(2+) is required as a cofactor.

Functionally, probable deacetylase. This chain is Probable deacetylase AF_0130, found in Archaeoglobus fulgidus (strain ATCC 49558 / DSM 4304 / JCM 9628 / NBRC 100126 / VC-16).